The primary structure comprises 36 residues: Neuropeptide F (36 aa).

At phenylalanine 36 the chain carries Phenylalanine amide.

Belongs to the NPY family. Central and peripheral nervous system, and muscular pharynx.

Its subcellular location is the secreted. Functionally, may perform an important neurotransmitter function and may regulate muscular activity. The polypeptide is Neuropeptide F (Arthurdendyus triangulatus (New Zealand flatworm)).